The sequence spans 226 residues: ATP synthase F(0) complex subunit a (226 aa).

6 helical membrane passes run 6 to 26 (FASF…IIMF), 68 to 88 (WTLM…LGLL), 97 to 117 (QLSM…ITGF), 138 to 158 (IPML…ALAV), 164 to 184 (ITAG…LMNI), and 189 to 209 (ATIT…VALI).

It belongs to the ATPase A chain family. Component of the ATP synthase complex composed at least of ATP5F1A/subunit alpha, ATP5F1B/subunit beta, ATP5MC1/subunit c (homooctomer), MT-ATP6/subunit a, MT-ATP8/subunit 8, ATP5ME/subunit e, ATP5MF/subunit f, ATP5MG/subunit g, ATP5MK/subunit k, ATP5MJ/subunit j, ATP5F1C/subunit gamma, ATP5F1D/subunit delta, ATP5F1E/subunit epsilon, ATP5PF/subunit F6, ATP5PB/subunit b, ATP5PD/subunit d, ATP5PO/subunit OSCP. ATP synthase complex consists of a soluble F(1) head domain (subunits alpha(3) and beta(3)) - the catalytic core - and a membrane F(0) domain - the membrane proton channel (subunits c, a, 8, e, f, g, k and j). These two domains are linked by a central stalk (subunits gamma, delta, and epsilon) rotating inside the F1 region and a stationary peripheral stalk (subunits F6, b, d, and OSCP). Interacts with DNAJC30; interaction is direct.

Its subcellular location is the mitochondrion inner membrane. It carries out the reaction H(+)(in) = H(+)(out). Functionally, subunit a, of the mitochondrial membrane ATP synthase complex (F(1)F(0) ATP synthase or Complex V) that produces ATP from ADP in the presence of a proton gradient across the membrane which is generated by electron transport complexes of the respiratory chain. ATP synthase complex consist of a soluble F(1) head domain - the catalytic core - and a membrane F(1) domain - the membrane proton channel. These two domains are linked by a central stalk rotating inside the F(1) region and a stationary peripheral stalk. During catalysis, ATP synthesis in the catalytic domain of F(1) is coupled via a rotary mechanism of the central stalk subunits to proton translocation. With the subunit c (ATP5MC1), forms the proton-conducting channel in the F(0) domain, that contains two crucial half-channels (inlet and outlet) that facilitate proton movement from the mitochondrial intermembrane space (IMS) into the matrix. Protons are taken up via the inlet half-channel and released through the outlet half-channel, following a Grotthuss mechanism. This chain is ATP synthase F(0) complex subunit a, found in Mus musculus (Mouse).